We begin with the raw amino-acid sequence, 158 residues long: Eukaryotic translation initiation factor 5A-3 (158 aa).

The span at Met1–Ser10 shows a compositional bias: basic and acidic residues. The interval Met1–Ala23 is disordered. Phosphoserine is present on Ser2. Lys51 bears the Hypusine mark.

Belongs to the eIF-5A family. Post-translationally, lys-52 undergoes hypusination, a unique post-translational modification that consists in the addition of a butylamino group from spermidine to lysine side chain, leading to the formation of the unusual amino acid hypusine. eIF-5As are the only known proteins to undergo this modification, which is essential for their function. As to expression, expressed in the vascular tissues of roots, stems and leaves. Localized in phloem companion cells rather than sieve-tube members. Not expressed in xylem or procambium. Detected in root tips and in the chalazal tissue of fertilized ovules.

In terms of biological role, translation factor that promotes translation elongation and termination, particularly upon ribosome stalling at specific amino acid sequence contexts. Binds between the exit (E) and peptidyl (P) site of the ribosome and promotes rescue of stalled ribosome: specifically required for efficient translation of polyproline-containing peptides as well as other motifs that stall the ribosome. Acts as a ribosome quality control (RQC) cofactor by joining the RQC complex to facilitate peptidyl transfer during CAT tailing step. Involved in supporting growth and plays a regulatory role in the response to sub-lethal osmotic and nutrient stress. This is Eukaryotic translation initiation factor 5A-3 (ELF5A-3) from Arabidopsis thaliana (Mouse-ear cress).